Here is a 205-residue protein sequence, read N- to C-terminus: Urease accessory protein UreG (205 aa).

Gly14–Thr21 serves as a coordination point for GTP.

Belongs to the SIMIBI class G3E GTPase family. UreG subfamily. Homodimer. UreD, UreF and UreG form a complex that acts as a GTP-hydrolysis-dependent molecular chaperone, activating the urease apoprotein by helping to assemble the nickel containing metallocenter of UreC. The UreE protein probably delivers the nickel.

It localises to the cytoplasm. Its function is as follows. Facilitates the functional incorporation of the urease nickel metallocenter. This process requires GTP hydrolysis, probably effectuated by UreG. In Escherichia coli O157:H7, this protein is Urease accessory protein UreG.